Reading from the N-terminus, the 599-residue chain is Genetic interactor of prohibitins 3, mitochondrial (599 aa).

Residues 1–46 (MLSLRRSIWIAACKRVSSFRTTIPIKSLHTNSQPVLSLRNVKFRPY) constitute a mitochondrion transit peptide. A CP-type G domain is found at 158–368 (IESLDAIMTS…MHDVPGFGEN (211 aa)). The disordered stretch occupies residues 312 to 342 (NSGASTPSDIRALRRKNEQEKNRTGPGASYM). The span at 322–334 (RALRRKNEQEKNR) shows a compositional bias: basic and acidic residues.

The protein belongs to the TRAFAC class YlqF/YawG GTPase family. GEP3 subfamily.

It localises to the mitochondrion. In terms of biological role, may be involved in the mitochondrial lipid metabolism. This chain is Genetic interactor of prohibitins 3, mitochondrial (GEP3), found in Meyerozyma guilliermondii (strain ATCC 6260 / CBS 566 / DSM 6381 / JCM 1539 / NBRC 10279 / NRRL Y-324) (Yeast).